Consider the following 70-residue polypeptide: Flexible pilin (70 aa).

Positions 1–24 (MPNFFRNGCIALVGSVAAMGAAHA) are cleaved as a signal peptide.

As to quaternary structure, homomer.

The protein localises to the fimbrium. Functionally, fimbriae (also called pili) are polar filaments radiating from the surface of the bacterium to a length of 0.5-1.5 micrometers and numbering 100-300 per cell. They enable bacteria to colonize the epithelium of specific host organs. Flexible pili possess hemagglutinating function. The polypeptide is Flexible pilin (aerA) (Aeromonas hydrophila).